The sequence spans 398 residues: S-adenosylmethionine synthase (398 aa).

His16 lines the ATP pocket. Asp18 is a binding site for Mg(2+). Residue Glu51 participates in K(+) binding. L-methionine contacts are provided by Glu64 and Gln108. The tract at residues 108-118 is flexible loop; that stretch reads QSADIAQGVDA. ATP-binding positions include 176–178, 242–243, Asp251, 257–258, Ala274, and Lys278; these read DSK, KF, and RK. Asp251 provides a ligand contact to L-methionine. An L-methionine-binding site is contributed by Lys282.

This sequence belongs to the AdoMet synthase family. In terms of assembly, homotetramer; dimer of dimers. The cofactor is Mg(2+). Requires K(+) as cofactor.

It localises to the cytoplasm. The enzyme catalyses L-methionine + ATP + H2O = S-adenosyl-L-methionine + phosphate + diphosphate. It functions in the pathway amino-acid biosynthesis; S-adenosyl-L-methionine biosynthesis; S-adenosyl-L-methionine from L-methionine: step 1/1. Its function is as follows. Catalyzes the formation of S-adenosylmethionine (AdoMet) from methionine and ATP. The overall synthetic reaction is composed of two sequential steps, AdoMet formation and the subsequent tripolyphosphate hydrolysis which occurs prior to release of AdoMet from the enzyme. The chain is S-adenosylmethionine synthase from Bradyrhizobium diazoefficiens (strain JCM 10833 / BCRC 13528 / IAM 13628 / NBRC 14792 / USDA 110).